The sequence spans 209 residues: FMN-dependent NADH:quinone oxidoreductase (209 aa).

Residues S10, S16–S18, and M98–F101 each bind FMN.

The protein belongs to the azoreductase type 1 family. As to quaternary structure, homodimer. It depends on FMN as a cofactor.

It carries out the reaction 2 a quinone + NADH + H(+) = 2 a 1,4-benzosemiquinone + NAD(+). It catalyses the reaction N,N-dimethyl-1,4-phenylenediamine + anthranilate + 2 NAD(+) = 2-(4-dimethylaminophenyl)diazenylbenzoate + 2 NADH + 2 H(+). Its function is as follows. Quinone reductase that provides resistance to thiol-specific stress caused by electrophilic quinones. Functionally, also exhibits azoreductase activity. Catalyzes the reductive cleavage of the azo bond in aromatic azo compounds to the corresponding amines. The protein is FMN-dependent NADH:quinone oxidoreductase of Nitratidesulfovibrio vulgaris (strain ATCC 29579 / DSM 644 / CCUG 34227 / NCIMB 8303 / VKM B-1760 / Hildenborough) (Desulfovibrio vulgaris).